We begin with the raw amino-acid sequence, 634 residues long: Threonine--tRNA ligase (634 aa).

Positions 1–61 (MINITLPDGS…DHDASLRIIT (61 aa)) constitute a TGS domain. Residues 243–534 (DHRRIGKAQD…LIEHHAGAFP (292 aa)) are catalytic. Zn(2+) contacts are provided by cysteine 334, histidine 385, and histidine 511.

The protein belongs to the class-II aminoacyl-tRNA synthetase family. As to quaternary structure, homodimer. Requires Zn(2+) as cofactor.

The protein localises to the cytoplasm. It carries out the reaction tRNA(Thr) + L-threonine + ATP = L-threonyl-tRNA(Thr) + AMP + diphosphate + H(+). Functionally, catalyzes the attachment of threonine to tRNA(Thr) in a two-step reaction: L-threonine is first activated by ATP to form Thr-AMP and then transferred to the acceptor end of tRNA(Thr). Also edits incorrectly charged L-seryl-tRNA(Thr). The chain is Threonine--tRNA ligase from Xanthomonas euvesicatoria pv. vesicatoria (strain 85-10) (Xanthomonas campestris pv. vesicatoria).